Reading from the N-terminus, the 149-residue chain is 2S seed storage albumin protein (149 aa).

The first 22 residues, 1 to 22 (MKLFIILATATLLIAATQATYP), serve as a signal peptide directing secretion. 4 disulfide bridges follow: Cys-38-Cys-98, Cys-52-Cys-87, Cys-88-Cys-133, and Cys-100-Cys-140. The igE-binding stretch occupies residues 121–128 (EGVRDLKE).

The protein belongs to the 2S seed storage albumins family. As to expression, expressed in seeds (at protein level).

Functionally, seed storage protein. The protein is 2S seed storage albumin protein of Fagopyrum esculentum (Common buckwheat).